Consider the following 65-residue polypeptide: MAMAIDGYECTVCGDCEPVCPTGSIVFRDDHYAIEADSCNECTDVGEPRCLGVCPVDLCIQPLDD.

2 4Fe-4S ferredoxin-type domains span residues 2-30 (AMAIDGYECTVCGDCEPVCPTGSIVFRDD) and 32-65 (YAIEADSCNECTDVGEPRCLGVCPVDLCIQPLDD). Positions 10, 13, 16, 20, 39, 42, 50, and 54 each coordinate [4Fe-4S] cluster.

It depends on [4Fe-4S] cluster as a cofactor.

The protein is Ferredoxin-like protein in vnf region of Azotobacter vinelandii.